Here is a 214-residue protein sequence, read N- to C-terminus: Phosphoenolpyruvate guanylyltransferase 2 (214 aa).

Phosphoenolpyruvate contacts are provided by T135, G150, and S153.

It belongs to the CofC family.

It carries out the reaction phosphoenolpyruvate + GTP + H(+) = enolpyruvoyl-2-diphospho-5'-guanosine + diphosphate. Its pathway is cofactor biosynthesis; coenzyme F420 biosynthesis. In terms of biological role, guanylyltransferase that catalyzes the activation of phosphoenolpyruvate (PEP) as enolpyruvoyl-2-diphospho-5'-guanosine, via the condensation of PEP with GTP. It is involved in the biosynthesis of coenzyme F420, a hydride carrier cofactor. This chain is Phosphoenolpyruvate guanylyltransferase 2, found in Rhodococcus jostii (strain RHA1).